The sequence spans 272 residues: Phosphate import ATP-binding protein PstB 1 (272 aa).

Positions 26 to 267 (ISIENLNLFY…PMKKQTEDYI (242 aa)) constitute an ABC transporter domain. 58-65 (GPSGCGKS) is an ATP binding site.

Belongs to the ABC transporter superfamily. Phosphate importer (TC 3.A.1.7) family. In terms of assembly, the complex is composed of two ATP-binding proteins (PstB), two transmembrane proteins (PstC and PstA) and a solute-binding protein (PstS).

It is found in the cell inner membrane. The enzyme catalyses phosphate(out) + ATP + H2O = ADP + 2 phosphate(in) + H(+). Its function is as follows. Part of the ABC transporter complex PstSACB involved in phosphate import. Responsible for energy coupling to the transport system. The protein is Phosphate import ATP-binding protein PstB 1 of Vibrio parahaemolyticus serotype O3:K6 (strain RIMD 2210633).